A 320-amino-acid polypeptide reads, in one-letter code: Polyisoprenyl-teichoic acid--peptidoglycan teichoic acid transferase TagU (320 aa).

Over 1–15 the chain is Cytoplasmic; sequence MVSRTERKQHKKRRK. The helical; Signal-anchor for type II membrane protein transmembrane segment at 16–36 threads the bilayer; sequence WPFWLGGILLVLLLLISGGIF. Over 37 to 320 the chain is Extracellular; it reads LIYNQVGAVV…SEITGHMQEQ (284 aa).

It belongs to the LytR/CpsA/Psr (LCP) family.

Its subcellular location is the cell membrane. It participates in cell wall biogenesis. May catalyze the final step in cell wall teichoic acid biosynthesis, the transfer of the anionic cell wall polymers (APs) from their lipid-linked precursor to the cell wall peptidoglycan (PG). This Oceanobacillus iheyensis (strain DSM 14371 / CIP 107618 / JCM 11309 / KCTC 3954 / HTE831) protein is Polyisoprenyl-teichoic acid--peptidoglycan teichoic acid transferase TagU.